Consider the following 219-residue polypeptide: MKKKTGGMRIFKVFGLFLFSLIFFGLLSLATFPKFLLFDRLLIQNKIFLIAQKVKENSMSIELFKGKVYFQNREALEFDYTKLSLGFLSVNGKILCRGKISEISYSFLGSIETKFRDFSCTPFVKKVNGRIELSDGIYGRVKLEGFKTELALLDEINLNFKGQTFTGSVKYLGMELKGQGRITLNRKNFLMSKVDGEFKGNGVRIKVQGTLNNLRVYMK.

Residues 13–32 form a helical membrane-spanning segment; it reads VFGLFLFSLIFFGLLSLATF.

Its subcellular location is the membrane. This is an uncharacterized protein from Aquifex aeolicus (strain VF5).